Reading from the N-terminus, the 213-residue chain is Oxidase ustYa (213 aa).

Positions 1-26 (MAERSSNGYKEVPVRQSEESTIAEEE) are disordered. The helical transmembrane segment at 48–68 (AVWFLIALLLLSNIGLLGGLI) threads the bilayer. Residue N98 is glycosylated (N-linked (GlcNAc...) asparagine). 2 short sequence motifs (HXXHC) span residues 123-127 (HQLHC) and 150-154 (HLMHC).

It belongs to the ustYa family.

The protein localises to the membrane. It participates in mycotoxin biosynthesis. Oxidase; part of the gene cluster that mediates the biosynthesis of the secondary metabolite ustiloxin B, an antimitotic tetrapeptide. First, ustA is processed by the subtilisin-like endoprotease Kex2 that is outside the ustiloxin B gene cluster, at the C-terminal side of Arg-Lys, after transfer to Golgi apparatus through the endoplasmic reticulum (ER). Cleavage by KEX2 generates 16 peptides YAIG-I to YAIG-XVI. To process the precursor peptide further, at least two peptidases are necessary to cleave the N-terminal and C-terminal sides of the Tyr-Ala-Ile-Gly core peptide which serves as backbone for the synthesis of ustiloxin B, through cyclization and modification of the tyrosine with a non-protein coding amino acid, norvaline. One of the two peptidases must be the serine peptidase ustP; and the other pepdidase is probably ustH. Macrocyclization of the core peptide derived from ustA requires the tyrosinase ustQ, as well as the homologous oxidases ustYa and ustYb, and leads to the production of the first cyclization product N-desmethylustiloxin F. For the formation of N-desmethylustiloxin F, three oxidation steps are required, hydroxylation at the benzylic position, hydroxylation at either the aromatic ring of Tyr or beta-position of Ile, and oxidative cyclization. UstQ may catalyze the oxidation of a phenol moiety, whereas the ustYa and ustYb are most likely responsible for the remaining two-step oxidations. N-desmethylustiloxin F is then methylated by ustM to yield ustiloxin F which in turn substrate of the cytochrome P450 monooxygenase ustC which catalyzes the formation of S-deoxyustiloxin H. The flavoprotein monooxygenases ustF1 and ustF2 then participate in the modification of the side chain of S-deoxyustiloxin H, leading to the synthesis of an oxime intermediate, via ustiloxin H. Finally, carboxylative dehydration performed by the cysteine desulfurase-like protein ustD yields ustiloxin B. This chain is Oxidase ustYa, found in Aspergillus flavus (strain ATCC 200026 / FGSC A1120 / IAM 13836 / NRRL 3357 / JCM 12722 / SRRC 167).